The primary structure comprises 820 residues: Protein bicaudal D homolog 2 (820 aa).

S2 bears the N-acetylserine mark. Residues 20 to 270 (EWLRAEVKRL…LSHYMSINDS (251 aa)) are a coiled coil. Positions 25–400 (EVKRLSHELA…RLTENLSALR (376 aa)) are interaction with DYNLL1, DYNC1H1, DYNC1I2, DCTN1 and DCTN2. Phosphoserine occurs at positions 190, 224, and 320. Residues 313–332 (SSLDNKTSTPRKDGLAPPSP) form a disordered region. T321 carries the phosphothreonine modification. The interaction with KIF5A stretch occupies residues 336–595 (SDLLSELHIS…LLATEVGRAD (260 aa)). Positions 340–539 (SELHISEIQK…VTFSEELANL (200 aa)) form a coiled coil. Residues S345 and S397 each carry the phosphoserine modification. Disordered stretches follow at residues 400–427 (RRLQ…GDYY), 563–582 (QGKA…PVLL), 591–618 (VGRA…DPRR), and 799–820 (HEQT…SPSL). Residues 404–424 (AGKERQTSLDNEKDRDSHEDG) are compositionally biased toward basic and acidic residues. A phosphoserine mark is found at S570 and S578. Residues 586 to 820 (LLATEVGRAD…SKAKPASPSL (235 aa)) are interaction with RANBP2. A Phosphothreonine modification is found at T598. Positions 602-614 (SPSPSSSLPSPLS) are enriched in low complexity. Positions 662–804 (DKDKEALMEE…LELDHEQTRR (143 aa)) form a coiled coil. The interaction with RAB6A stretch occupies residues 662 to 810 (DKDKEALMEE…QTRRGRSKAA (149 aa)). The residue at position 819 (S819) is a Phosphoserine.

Belongs to the BicD family. Part of a tripartite complex with dynein and dynactin, acts an adapter linking the dynein motor complex and dynactin. Interacts with CPNE4 (via VWFA domain). Interacts with NEK9. Interacts with DCTN2. Interacts with RAB6A. Interacts with DNAI1. Interacts with DYNLL1, DYNC1H1, DYNC1I2 and DCTN1. Forms a complex with dynein and dynactin. The dynein-dynactin-BICD2 ternary complex (DDB) binds preferentially to tyrosinated microtubules than to detyrosinated microtubules. Interacts with RANBP2, RAB6A and KIF5A. Interacts with KIF1C. Post-translationally, phosphorylated by NEK9 in vitro. In terms of tissue distribution, ubiquitously expressed with high expression in the spinal cord.

The protein localises to the golgi apparatus. It is found in the cytoplasm. It localises to the cytoskeleton. Its subcellular location is the nucleus. The protein resides in the nuclear pore complex. The protein localises to the nucleus envelope. Functionally, acts as an adapter protein linking the dynein motor complex to various cargos and converts dynein from a non-processive to a highly processive motor in the presence of dynactin. Facilitates and stabilizes the interaction between dynein and dynactin and activates dynein processivity (the ability to move along a microtubule for a long distance without falling off the track). Facilitates the binding of RAB6A to the Golgi by stabilizing its GTP-bound form. Regulates coat complex coatomer protein I (COPI)-independent Golgi-endoplasmic reticulum transport via its interaction with RAB6A and recruitment of the dynein-dynactin motor complex. Contributes to nuclear and centrosomal positioning prior to mitotic entry through regulation of both dynein and kinesin-1. During G2 phase of the cell cycle, associates with RANBP2 at the nuclear pores and recruits dynein and dynactin to the nuclear envelope to ensure proper positioning of the nucleus relative to centrosomes prior to the onset of mitosis. This chain is Protein bicaudal D homolog 2 (Bicd2), found in Mus musculus (Mouse).